The following is a 325-amino-acid chain: Envelope protein H3 (325 aa).

The Virion surface portion of the chain corresponds to Met-1–Gly-285. The helical; Signal-anchor transmembrane segment at Leu-286–Phe-306 threads the bilayer. At Asn-307–Ile-325 the chain is on the intravirion side.

This sequence belongs to the orthopoxvirus OPG108 family. Does not contain disulfide bonds.

Its subcellular location is the virion membrane. Functionally, envelope protein that binds to heparan sulfate on the cell surface and might provide virion attachment to target cell. The sequence is that of Envelope protein H3 (OPG108) from Variola virus (isolate Human/India/Ind3/1967) (VARV).